The sequence spans 355 residues: 3-dehydroquinate synthase (355 aa).

Residues 71-76 (EGEASK), 105-109 (GVVGD), 129-130 (TS), Lys-142, and Lys-151 contribute to the NAD(+) site. The Zn(2+) site is built by Glu-184, His-246, and His-263.

It belongs to the sugar phosphate cyclases superfamily. Dehydroquinate synthase family. Co(2+) is required as a cofactor. Zn(2+) serves as cofactor. It depends on NAD(+) as a cofactor.

It is found in the cytoplasm. It catalyses the reaction 7-phospho-2-dehydro-3-deoxy-D-arabino-heptonate = 3-dehydroquinate + phosphate. It participates in metabolic intermediate biosynthesis; chorismate biosynthesis; chorismate from D-erythrose 4-phosphate and phosphoenolpyruvate: step 2/7. In terms of biological role, catalyzes the conversion of 3-deoxy-D-arabino-heptulosonate 7-phosphate (DAHP) to dehydroquinate (DHQ). In Streptococcus gordonii (strain Challis / ATCC 35105 / BCRC 15272 / CH1 / DL1 / V288), this protein is 3-dehydroquinate synthase.